The following is a 135-amino-acid chain: ATP synthase epsilon chain (135 aa).

Belongs to the ATPase epsilon chain family. In terms of assembly, F-type ATPases have 2 components, CF(1) - the catalytic core - and CF(0) - the membrane proton channel. CF(1) has five subunits: alpha(3), beta(3), gamma(1), delta(1), epsilon(1). CF(0) has three main subunits: a, b and c.

The protein resides in the cell inner membrane. In terms of biological role, produces ATP from ADP in the presence of a proton gradient across the membrane. The protein is ATP synthase epsilon chain of Brucella anthropi (strain ATCC 49188 / DSM 6882 / CCUG 24695 / JCM 21032 / LMG 3331 / NBRC 15819 / NCTC 12168 / Alc 37) (Ochrobactrum anthropi).